Reading from the N-terminus, the 412-residue chain is ORC1-type DNA replication protein 2 (412 aa).

Residues 61–65 (VGKTA), Tyr-207, and Arg-219 contribute to the ATP site.

It belongs to the CDC6/cdc18 family.

Involved in regulation of DNA replication. This chain is ORC1-type DNA replication protein 2 (cdc6b), found in Haloarcula marismortui (strain ATCC 43049 / DSM 3752 / JCM 8966 / VKM B-1809) (Halobacterium marismortui).